A 305-amino-acid polypeptide reads, in one-letter code: Sulfate adenylyltransferase subunit 2 (305 aa).

The protein belongs to the PAPS reductase family. CysD subfamily. As to quaternary structure, heterodimer composed of CysD, the smaller subunit, and CysN.

It carries out the reaction sulfate + ATP + H(+) = adenosine 5'-phosphosulfate + diphosphate. Its pathway is sulfur metabolism; hydrogen sulfide biosynthesis; sulfite from sulfate: step 1/3. Functionally, with CysN forms the ATP sulfurylase (ATPS) that catalyzes the adenylation of sulfate producing adenosine 5'-phosphosulfate (APS) and diphosphate, the first enzymatic step in sulfur assimilation pathway. APS synthesis involves the formation of a high-energy phosphoric-sulfuric acid anhydride bond driven by GTP hydrolysis by CysN coupled to ATP hydrolysis by CysD. This chain is Sulfate adenylyltransferase subunit 2, found in Pseudomonas savastanoi pv. phaseolicola (strain 1448A / Race 6) (Pseudomonas syringae pv. phaseolicola (strain 1448A / Race 6)).